The chain runs to 501 residues: Large ribosomal subunit protein uL2m (501 aa).

Disordered regions lie at residues 187–217 (GRERLSPLRGENTFSQSEGQRWKTQSGAPRR) and 459–501 (AMNP…KRRN). Residues 198–213 (NTFSQSEGQRWKTQSG) are compositionally biased toward polar residues. Residues 464 to 474 (DHPHGGGEGRT) are compositionally biased toward basic and acidic residues.

Belongs to the universal ribosomal protein uL2 family.

The protein resides in the mitochondrion. The chain is Large ribosomal subunit protein uL2m (RPL2) from Marchantia polymorpha (Common liverwort).